Here is a 215-residue protein sequence, read N- to C-terminus: Ribosomal RNA small subunit methyltransferase G (215 aa).

Residues Gly77, Phe82, 130–131 (IE), and Arg146 contribute to the S-adenosyl-L-methionine site.

This sequence belongs to the methyltransferase superfamily. RNA methyltransferase RsmG family.

The protein localises to the cytoplasm. It carries out the reaction guanosine(527) in 16S rRNA + S-adenosyl-L-methionine = N(7)-methylguanosine(527) in 16S rRNA + S-adenosyl-L-homocysteine. Its function is as follows. Specifically methylates the N7 position of guanine in position 527 of 16S rRNA. This Bartonella henselae (strain ATCC 49882 / DSM 28221 / CCUG 30454 / Houston 1) (Rochalimaea henselae) protein is Ribosomal RNA small subunit methyltransferase G.